A 92-amino-acid chain; its full sequence is PqqA binding protein (92 aa).

Belongs to the PqqD family. As to quaternary structure, monomer. Interacts with PqqE.

The protein operates within cofactor biosynthesis; pyrroloquinoline quinone biosynthesis. Functionally, functions as a PqqA binding protein and presents PqqA to PqqE, in the pyrroloquinoline quinone (PQQ) biosynthetic pathway. The chain is PqqA binding protein from Stutzerimonas stutzeri (strain A1501) (Pseudomonas stutzeri).